A 580-amino-acid chain; its full sequence is MAGSEEQWPRRREDGDPDAAAAPLQDAELALAGINMLLNNGFRESDQLFKQYRNHSPLMSFGASFVSFLNAMMTFEEEKMQLACDDLKTTEKLCESEEAGVIETIKNKIKKNVDARKSTPSMVDRLQRQIIIADCQVYLAVLSFVKQELSAYIKGGWILRKAWKIYSKCYVDINALQELYQKKLTEEPLASDAANDNHVVAEGVTEESLSRLKGAVSFGYGLFHLCISMVPPNLLKIINLLGFPGDRLQGLSSLTYASESKDMKAPLATLALLWYHTVVRPFFALDGSDNKGGLDEAKAILLRKESAYPNSSLFMFFKGRIQRLECQINSALTSFHTALELAVDQREIQHVCLYEIGWCSMIELNFKDAFDSFERLKNESRWSQCYYAYLTAVCQGATGDVDGAQLVFKEVQKLFKRKNNQIEQFSVKKAERFRKQTPTRALCVLASIEVLYLWKALPNCSFPNLQRMSQACHEVDDSSVVGLKHLLLGAIHKCLGNSQDALQFFQRAARDELCRQSNSYVPPYACYELGCLLLDSAETVGRGRTLLLQAKEDFSGYDFENRLHVRIHAALASLRELVPQ.

3 TPR repeats span residues 312–345 (SLFM…AVDQ), 350–383 (HVCL…SRWS), and 482–515 (GLKH…ELCR).

Belongs to the TTC39 family.

The polypeptide is Tetratricopeptide repeat protein 39C (Ttc39c) (Mus musculus (Mouse)).